Reading from the N-terminus, the 23-residue chain is Paralytic peptide 1 (23 aa).

A disulfide bond links Cys7 and Cys19.

It belongs to the GBP/PSP1/paralytic peptide family. In terms of tissue distribution, hemolymph.

In terms of biological role, causes rapid, rigid paralysis when injected into Lepidopteran larvae. The physiological role may be to reduce hemolymph loss following injury and promote wound healing. The sequence is that of Paralytic peptide 1 from Spodoptera exigua (Beet armyworm).